Here is an 86-residue protein sequence, read N- to C-terminus: Putative defensin-like protein 9 (86 aa).

The first 29 residues, 1–29 (MKSSMQLISTLFFLVILVVAPGMKMVVEG), serve as a signal peptide directing secretion. Gln-30 bears the Pyrrolidone carboxylic acid mark. 4 cysteine pairs are disulfide-bonded: Cys-34–Cys-79, Cys-45–Cys-65, Cys-51–Cys-73, and Cys-55–Cys-75.

This sequence belongs to the DEFL family.

It localises to the secreted. The polypeptide is Putative defensin-like protein 9 (LCR76) (Arabidopsis thaliana (Mouse-ear cress)).